Consider the following 448-residue polypeptide: Vimentin (448 aa).

The tract at residues 1 to 77 (PRHLEPAGSN…FSLADAINTE (77 aa)) is head. The residue at position 9 (serine 9) is a Phosphoserine. An O-linked (GlcNAc) threonine glycan is attached at threonine 16. Serine 17 bears the Phosphoserine; by PKC; alternate mark. Serine 17 carries an O-linked (GlcNAc) serine; alternate glycan. Position 22 is a phosphoserine; by CaMK2, PKA, PKC and ROCK2 (serine 22). Residues serine 29, serine 31, and serine 33 each carry the phosphoserine modification. Position 35 is a phosphotyrosine (tyrosine 35). The residue at position 37 (serine 37) is a Phosphoserine. The residue at position 38 (serine 38) is a Phosphoserine; by CDK5 and CDK1. Position 43 is a phosphotyrosine (tyrosine 43). Position 48 is a phosphoserine; by PKA and PKC (serine 48). Serine 54 bears the Phosphoserine; by AURKB and ROCK2 mark. Serine 55 carries the post-translational modification Phosphoserine. Residue serine 65 is modified to Phosphoserine; by CaMK2. Residue serine 69 is modified to Phosphoserine. The tract at residues 78–113 (FKNTRTNEKVELQELNDRFADYIDKVRFLEQQNKIL) is coil 1A. A coiled-coil region spans residues 78–113 (FKNTRTNEKVELQELNDRFADYIDKVRFLEQQNKIL). In terms of domain architecture, IF rod spans 85–393 (EKVELQELND…KLLEGEESRI (309 aa)). A Glycyl lysine isopeptide (Lys-Gly) (interchain with G-Cter in SUMO2) cross-link involves residue lysine 86. Tyrosine 99 is subject to Phosphotyrosine. Lysine 102, lysine 111, and lysine 121 each carry N6-acetyllysine; alternate. Lysine 102 and lysine 111 each carry N6-succinyllysine; alternate. Glycyl lysine isopeptide (Lys-Gly) (interchain with G-Cter in SUMO2); alternate cross-links involve residues lysine 102, lysine 111, and lysine 121. A linker 1 region spans residues 114–135 (LAELEQLKGQGKSRLGDLYEEE). At serine 126 the chain carries Phosphoserine. The stretch at 136–227 (MRELRRQVDQ…KLHDEEIQEL (92 aa)) forms a coiled coil. Residues 136–227 (MRELRRQVDQ…KLHDEEIQEL (92 aa)) form a coil 1B region. An N6-acetyllysine modification is found at lysine 150. Position 170 is an N6-acetyllysine; alternate (lysine 170). An N6-succinyllysine; alternate modification is found at lysine 170. At serine 196 the chain carries Phosphoserine. N6-acetyllysine; alternate is present on lysine 205. Residue lysine 205 forms a Glycyl lysine isopeptide (Lys-Gly) (interchain with G-Cter in SUMO2); alternate linkage. Phosphoserine is present on serine 208. Position 217 is an N6-acetyllysine (lysine 217). Residues 228–250 (QAQIQEQHVQIDVDVSKPDLTAA) form a linker 12 region. Lysine 244 is covalently cross-linked (Glycyl lysine isopeptide (Lys-Gly) (interchain with G-Cter in SUMO2)). Residues 251–389 (LRDVRQQYES…ATYRKLLEGE (139 aa)) form a coil 2 region. Position 276 is an N6-acetyllysine; alternate (lysine 276). Lysine 276 carries the N6-succinyllysine; alternate modification. A Glycyl lysine isopeptide (Lys-Gly) (interchain with G-Cter in SUMO2); alternate cross-link involves residue lysine 276. Phosphoserine is present on serine 281. Residues 285-389 (NRNNDALRQA…ATYRKLLEGE (105 aa)) adopt a coiled-coil conformation. Residue lysine 295 forms a Glycyl lysine isopeptide (Lys-Gly) (interchain with G-Cter in SUMO2) linkage. Position 307 is a phosphoserine (serine 307). Residues 308–311 (LTCE) carry the [IL]-x-C-x-x-[DE] motif motif. At lysine 355 the chain carries N6-acetyllysine; alternate. A Glycyl lysine isopeptide (Lys-Gly) (interchain with G-Cter in SUMO2); alternate cross-link involves residue lysine 355. The segment at 390-448 (ESRISLPLPNFSSLNLRETNLESLPLVDTHSKRTLLIKTVETRDGQVINETSQHHDDLE) is tail. Phosphoserine occurs at positions 391, 394, 401, and 402. Residue threonine 408 is modified to Phosphothreonine. At serine 412 the chain carries Phosphoserine. The residue at position 418 (threonine 418) is a Phosphothreonine. The residue at position 420 (serine 420) is a Phosphoserine. A Glycyl lysine isopeptide (Lys-Gly) (interchain with G-Cter in SUMO2) cross-link involves residue lysine 421. An N6-acetyllysine; alternate modification is found at lysine 427. Lysine 427 is subject to N6-succinyllysine; alternate. Residue lysine 427 forms a Glycyl lysine isopeptide (Lys-Gly) (interchain with G-Cter in SUMO2); alternate linkage. Residue lysine 427 forms a Glycyl lysine isopeptide (Lys-Gly) (interchain with G-Cter in SUMO1); alternate linkage. A phosphothreonine mark is found at threonine 428 and threonine 440. Residue serine 441 is modified to Phosphoserine.

Belongs to the intermediate filament family. Homomer assembled from elementary dimers. Identified in complexes that contain VIM, EZR, AHNAK, BFSP1, BFSP2, ANK2, PLEC, PRX and spectrin. Interacts with BCAS3. Interacts with LGSN. Interacts with SYNM. Interacts (via rod region) with PLEC (via CH 1 domain). Interacts with STK33. Interacts with LARP6. Interacts with RAB8B. Interacts with TOR1A; the interaction associates TOR1A with the cytoskeleton. Interacts with TOR1AIP1. Interacts with TOR1AIP1. Interacts with DIAPH1. Interacts with EPPK1; interaction is dependent of higher-order structure of intermediate filament. Interacts with the non-receptor tyrosine kinase SRMS; the interaction leads to phosphorylation of VIM. Interacts with NOD2. Interacts (via head region) with CORO1C. Interacts with HDGF. Interacts with PRKCE (via phorbol-ester/DAG-type 2 domain). Interacts with BFSP2. Interacts with PPL. Interacts with PKP1 and PKP2. Interacts with SCRIB (via PDZ domains); the interaction protects SCRIB from proteasomal degradation and facilitates SCRIB localization to intermediate filaments, the interaction is reduced by cell contact inhibition. In terms of processing, one of the most prominent phosphoproteins in various cells of mesenchymal origin. Phosphorylation is enhanced during cell division, at which time vimentin filaments are significantly reorganized. Phosphorylation by PKN1 inhibits the formation of filaments. Filament disassembly during mitosis is promoted by phosphorylation at Ser-37 as well as by nestin. Phosphorylated at Ser-38 by CDK5 during neutrophil secretion in the cytoplasm. Phosphorylated by STK33. Phosphorylated on tyrosine residues by SRMS. Post-translationally, S-nitrosylation is induced by interferon-gamma and oxidatively-modified low-densitity lipoprotein (LDL(ox)) possibly implicating the iNOS-S100A8/9 transnitrosylase complex.

It localises to the cytoplasm. Its subcellular location is the cytoskeleton. The protein resides in the nucleus matrix. It is found in the cell membrane. Vimentins are class-III intermediate filaments found in various non-epithelial cells, especially mesenchymal cells. Vimentin is attached to the nucleus, endoplasmic reticulum, and mitochondria, either laterally or terminally. Plays a role in cell directional movement, orientation, cell sheet organization and Golgi complex polarization at the cell migration front. Protects SCRIB from proteasomal degradation and facilitates its localization to intermediate filaments in a cell contact-mediated manner. Its function is as follows. Involved with LARP6 in the stabilization of type I collagen mRNAs for CO1A1 and CO1A2. The protein is Vimentin (VIM) of Cricetulus griseus (Chinese hamster).